A 552-amino-acid polypeptide reads, in one-letter code: Formate--tetrahydrofolate ligase (552 aa).

An ATP-binding site is contributed by 63–70; that stretch reads TPFGEGKT.

It belongs to the formate--tetrahydrofolate ligase family.

It catalyses the reaction (6S)-5,6,7,8-tetrahydrofolate + formate + ATP = (6R)-10-formyltetrahydrofolate + ADP + phosphate. It participates in one-carbon metabolism; tetrahydrofolate interconversion. The chain is Formate--tetrahydrofolate ligase from Caldicellulosiruptor bescii (strain ATCC BAA-1888 / DSM 6725 / KCTC 15123 / Z-1320) (Anaerocellum thermophilum).